The primary structure comprises 496 residues: Bifunctional protein HldE (496 aa).

Residues 1–335 are ribokinase; sequence MIKHNPPSPE…GALFRSHGPT (335 aa). Residue 211–214 coordinates ATP; it reads NRKE. The active site involves aspartate 280. The segment at 363-496 is cytidylyltransferase; that stretch reads FTNGCFDILH…IGKLRAGSTS (134 aa).

It in the N-terminal section; belongs to the carbohydrate kinase PfkB family. In the C-terminal section; belongs to the cytidylyltransferase family. As to quaternary structure, homodimer.

It catalyses the reaction D-glycero-beta-D-manno-heptose 7-phosphate + ATP = D-glycero-beta-D-manno-heptose 1,7-bisphosphate + ADP + H(+). It carries out the reaction D-glycero-beta-D-manno-heptose 1-phosphate + ATP + H(+) = ADP-D-glycero-beta-D-manno-heptose + diphosphate. It functions in the pathway nucleotide-sugar biosynthesis; ADP-L-glycero-beta-D-manno-heptose biosynthesis; ADP-L-glycero-beta-D-manno-heptose from D-glycero-beta-D-manno-heptose 7-phosphate: step 1/4. Its pathway is nucleotide-sugar biosynthesis; ADP-L-glycero-beta-D-manno-heptose biosynthesis; ADP-L-glycero-beta-D-manno-heptose from D-glycero-beta-D-manno-heptose 7-phosphate: step 3/4. Functionally, catalyzes the phosphorylation of D-glycero-D-manno-heptose 7-phosphate at the C-1 position to selectively form D-glycero-beta-D-manno-heptose-1,7-bisphosphate. In terms of biological role, catalyzes the ADP transfer from ATP to D-glycero-beta-D-manno-heptose 1-phosphate, yielding ADP-D-glycero-beta-D-manno-heptose. The sequence is that of Bifunctional protein HldE from Mesorhizobium japonicum (strain LMG 29417 / CECT 9101 / MAFF 303099) (Mesorhizobium loti (strain MAFF 303099)).